The following is a 520-amino-acid chain: Probable bifunctional tRNA threonylcarbamoyladenosine biosynthesis protein (520 aa).

The kae1 stretch occupies residues 1 to 318; that stretch reads MKIGPVLGIE…YRADQVLVTW (318 aa). Residues H105, H109, and Y126 each coordinate Fe cation. L-threonylcarbamoyladenylate is bound by residues 126–130, D158, G171, E175, and N251; that span reads YASGA. D279 is a binding site for Fe cation. Positions 327–520 constitute a Protein kinase domain; the sequence is RHPDAYSARG…HEIELRGRYL (194 aa). ATP is bound by residues 333 to 341 and K350; that span reads SARGAEAIV. Residue D437 is the Proton acceptor; for kinase activity of the active site.

In the N-terminal section; belongs to the KAE1 / TsaD family. It in the C-terminal section; belongs to the protein kinase superfamily. Tyr protein kinase family. BUD32 subfamily. Component of the KEOPS complex that consists of Kae1, Bud32, Cgi121 and Pcc1; the whole complex dimerizes. Fe(2+) serves as cofactor.

The protein resides in the cytoplasm. It catalyses the reaction L-seryl-[protein] + ATP = O-phospho-L-seryl-[protein] + ADP + H(+). The catalysed reaction is L-threonyl-[protein] + ATP = O-phospho-L-threonyl-[protein] + ADP + H(+). It carries out the reaction L-threonylcarbamoyladenylate + adenosine(37) in tRNA = N(6)-L-threonylcarbamoyladenosine(37) in tRNA + AMP + H(+). Its function is as follows. Required for the formation of a threonylcarbamoyl group on adenosine at position 37 (t(6)A37) in tRNAs that read codons beginning with adenine. Is a component of the KEOPS complex that is probably involved in the transfer of the threonylcarbamoyl moiety of threonylcarbamoyl-AMP (TC-AMP) to the N6 group of A37. The Kae1 domain likely plays a direct catalytic role in this reaction. The Bud32 domain probably displays kinase activity that regulates Kae1 function. The polypeptide is Probable bifunctional tRNA threonylcarbamoyladenosine biosynthesis protein (Methanospirillum hungatei JF-1 (strain ATCC 27890 / DSM 864 / NBRC 100397 / JF-1)).